Reading from the N-terminus, the 672-residue chain is MESFENKGFLDIEEGIQWIKKNSENLSSSKKTILARLQQFHKLCSEVGLNQHSISSLLDVILSKKTHFDKNHVQLLIKCLYPNELISQTIAIRIISSLDPHGLRCSYAIQAKLLNWLIHVYEFLDGNNLLCRYYGVLFHFLDFLTLRPYISNLLVLLTKHYHVKSFRIHQLLALYQKPGNTADPYLLALILTYKQHFPDVIVGSYTYRKHGSVRLDSEWIAATKAILNRQSEDVPLETWSSEKRKRQSSLIPDLITMKNTSSSYSLEELTSVQQMGLVYEKIVFPSRIAAVLKSKLFLIFLFLKNKNVYYSRLDEWLHITLNYGLALRSGSNNQEEEVLHLLYKYLLFSPKFPKSLLQYVITFFSKPNITEENYNLLTLLVTHIPITTDSSYFNSLLKEFEQFILQKNAEFCSKHLNILWLWLFRMLNLRIASMGNNHTLLEKCLLITNHATFLVSHFSWDVSLAYQLSRLFQLYYKILTKIRKQIEPNIPPKELIYVLFFQPSAFYINSMVGLLLLTKNYQERLMDSRIDAISKFTHSYLKSLSEIILLKEKRAILSFLQLWEPFKSDYSQFLPIATRIANDHPYAQRVFSLTCAPQFFSYINGYQIYLQQTNPATGSIPLKPIQEETFGAFQSNLHLSDSWEDFQKNFIIYLKKKGYLAISDFLLSTLNR.

This sequence belongs to the CENP-I/CTF3 family. In terms of assembly, component of the inner kinetochore constitutive centromere-associated network (CCAN) (also known as central kinetochore Sim4 complex in fission yeast), which is composed of at least cnl2, cnp3, cnp20, fta1, fta2, fta3, fta4, fta6, fta7, mal2, mhf1, mhf2, mis6, mis15, mis17, sim4 and wip1. Interacts with cnp1, sim4, mis15 and mis17.

The protein resides in the nucleus. Its subcellular location is the chromosome. It is found in the centromere. Functionally, component of the kinetochore, a multiprotein complex that assembles on centromeric DNA and attaches chromosomes to spindle microtubules, mediating chromosome segregation and sister chromatid segregation during meiosis and mitosis. Component of the inner kinetochore constitutive centromere-associated network (CCAN), which serves as a structural platform for outer kinetochore assembly. Required for the localization of cnp1 to the centromere. The polypeptide is Inner kinetochore subunit mis6 (mis6) (Schizosaccharomyces pombe (strain 972 / ATCC 24843) (Fission yeast)).